We begin with the raw amino-acid sequence, 217 residues long: Probable transaldolase (217 aa).

Lysine 83 functions as the Schiff-base intermediate with substrate in the catalytic mechanism.

The protein belongs to the transaldolase family. Type 3B subfamily.

The protein resides in the cytoplasm. It carries out the reaction D-sedoheptulose 7-phosphate + D-glyceraldehyde 3-phosphate = D-erythrose 4-phosphate + beta-D-fructose 6-phosphate. Its pathway is carbohydrate degradation; pentose phosphate pathway; D-glyceraldehyde 3-phosphate and beta-D-fructose 6-phosphate from D-ribose 5-phosphate and D-xylulose 5-phosphate (non-oxidative stage): step 2/3. Its function is as follows. Transaldolase is important for the balance of metabolites in the pentose-phosphate pathway. This Pseudothermotoga lettingae (strain ATCC BAA-301 / DSM 14385 / NBRC 107922 / TMO) (Thermotoga lettingae) protein is Probable transaldolase.